We begin with the raw amino-acid sequence, 146 residues long: Ferredoxin-type protein FwdE (146 aa).

2 consecutive 4Fe-4S ferredoxin-type domains span residues 90–115 (IKLF…TLDN) and 116–145 (FTVG…FIKE). The [4Fe-4S] cluster site is built by Cys125, Cys128, Cys131, and Cys135.

The cofactor is [4Fe-4S] cluster.

This chain is Ferredoxin-type protein FwdE (fwdE), found in Methanocaldococcus jannaschii (strain ATCC 43067 / DSM 2661 / JAL-1 / JCM 10045 / NBRC 100440) (Methanococcus jannaschii).